A 513-amino-acid polypeptide reads, in one-letter code: Cyclin-dependent kinase C-2 (513 aa).

The 301-residue stretch at 25 to 325 folds into the Protein kinase domain; it reads FEKLEQIGEG…AKDALDAEYF (301 aa). ATP-binding positions include 31–39 and K54; that span reads IGEGTYGQV. Position 35 is a phosphothreonine (T35). Y36 bears the Phosphotyrosine mark. The Proton acceptor role is filled by D164. At S191 the chain carries Phosphoserine. T198 is subject to Phosphothreonine. Over residues 336–348 the composition is skewed to basic and acidic residues; that stretch reads SLPKYEASHEFQT. A disordered region spans residues 336 to 513; the sequence is SLPKYEASHE…RNQQQYGNWQ (178 aa). Positions 417–433 are enriched in low complexity; sequence PNRYPQGGNQGGYNPNR. Gly residues-rich tracts occupy residues 457–478 and 485–494; these read GGGMGGAGGPRGGGGSGYGVGG and GPYGASGPGR. The segment covering 497–513 has biased composition (polar residues); the sequence is NYNQGGSRNQQQYGNWQ.

It belongs to the protein kinase superfamily. CMGC Ser/Thr protein kinase family. CDC2/CDKX subfamily.

The catalysed reaction is L-seryl-[protein] + ATP = O-phospho-L-seryl-[protein] + ADP + H(+). It catalyses the reaction L-threonyl-[protein] + ATP = O-phospho-L-threonyl-[protein] + ADP + H(+). The enzyme catalyses [DNA-directed RNA polymerase] + ATP = phospho-[DNA-directed RNA polymerase] + ADP + H(+). In Oryza sativa subsp. japonica (Rice), this protein is Cyclin-dependent kinase C-2 (CDKC-2).